Here is a 175-residue protein sequence, read N- to C-terminus: Protein-export protein SecB (175 aa).

This sequence belongs to the SecB family. In terms of assembly, homotetramer, a dimer of dimers. One homotetramer interacts with 1 SecA dimer.

It is found in the cytoplasm. Its function is as follows. One of the proteins required for the normal export of preproteins out of the cell cytoplasm. It is a molecular chaperone that binds to a subset of precursor proteins, maintaining them in a translocation-competent state. It also specifically binds to its receptor SecA. This is Protein-export protein SecB from Ehrlichia chaffeensis (strain ATCC CRL-10679 / Arkansas).